We begin with the raw amino-acid sequence, 343 residues long: DNA-directed RNA polymerase subunit alpha (343 aa).

The alpha N-terminal domain (alpha-NTD) stretch occupies residues Met-1–Asp-243. An alpha C-terminal domain (alpha-CTD) region spans residues Glu-261–Glu-343.

It belongs to the RNA polymerase alpha chain family. In terms of assembly, homodimer. The RNAP catalytic core consists of 2 alpha, 1 beta, 1 beta' and 1 omega subunit. When a sigma factor is associated with the core the holoenzyme is formed, which can initiate transcription.

The enzyme catalyses RNA(n) + a ribonucleoside 5'-triphosphate = RNA(n+1) + diphosphate. Functionally, DNA-dependent RNA polymerase catalyzes the transcription of DNA into RNA using the four ribonucleoside triphosphates as substrates. This Desulfotalea psychrophila (strain LSv54 / DSM 12343) protein is DNA-directed RNA polymerase subunit alpha.